Here is a 145-residue protein sequence, read N- to C-terminus: Putative pre-16S rRNA nuclease (145 aa).

The protein belongs to the YqgF nuclease family.

It is found in the cytoplasm. Its function is as follows. Could be a nuclease involved in processing of the 5'-end of pre-16S rRNA. The chain is Putative pre-16S rRNA nuclease from Thiobacillus denitrificans (strain ATCC 25259 / T1).